The primary structure comprises 134 residues: MWGRRRKLRRLNDVTISTCHVSAKVGTRLVFDHDGKIIQKTPYPHPRGTTVSVKQLFSTLPVRHKEFQRNIKKKRACFPFAFCRDCQFLEGSPAMLPVQPAKLTPRSTPPHPCSLEDNVITVFSSVKNGPGSSR.

It belongs to the DNA mismatch repair MutL/HexB family.

This chain is Postmeiotic segregation increased 2-like protein 5 (PMS2P5), found in Homo sapiens (Human).